A 463-amino-acid polypeptide reads, in one-letter code: GTPase Der (463 aa).

EngA-type G domains lie at 3-166 (PVVA…PESG) and 177-350 (IRIA…QSAM). GTP-binding positions include 9–16 (GRTNVGKS), 56–60 (DTGGI), 118–121 (NKID), 183–190 (GRPNVGKS), 230–234 (DTAGI), and 295–298 (NKWD). In terms of domain architecture, KH-like spans 351–435 (LDLSASRLTQ…PLKLVFKSAE (85 aa)).

It belongs to the TRAFAC class TrmE-Era-EngA-EngB-Septin-like GTPase superfamily. EngA (Der) GTPase family. Associates with the 50S ribosomal subunit.

Functionally, GTPase that plays an essential role in the late steps of ribosome biogenesis. This is GTPase Der from Methylococcus capsulatus (strain ATCC 33009 / NCIMB 11132 / Bath).